Consider the following 320-residue polypeptide: Probable arabinan endo-1,5-alpha-L-arabinosidase C (320 aa).

The signal sequence occupies residues 1-16; it reads MYRSTLLFLFIALVNA. The active-site Proton acceptor is the aspartate 31. Asparagine 73, asparagine 137, and asparagine 191 each carry an N-linked (GlcNAc...) asparagine glycan. Glutamate 199 (proton donor) is an active-site residue.

Belongs to the glycosyl hydrolase 43 family.

It localises to the secreted. It catalyses the reaction Endohydrolysis of (1-&gt;5)-alpha-arabinofuranosidic linkages in (1-&gt;5)-arabinans.. It participates in glycan metabolism; L-arabinan degradation. Functionally, endo-1,5-alpha-L-arabinanase involved in degradation of pectin. Its preferred substrate is linear 1,5-alpha-L-arabinan. In Aspergillus terreus (strain NIH 2624 / FGSC A1156), this protein is Probable arabinan endo-1,5-alpha-L-arabinosidase C (abnC).